We begin with the raw amino-acid sequence, 83 residues long: Transmembrane protein EP84R (83 aa).

The next 2 membrane-spanning stretches (helical) occupy residues 31-51 and 59-79; these read IIGV…IIIL and AGSI…FLIY.

This sequence belongs to the asfivirus EP84R family.

The protein resides in the virion membrane. The sequence is that of Transmembrane protein EP84R from Ornithodoros (relapsing fever ticks).